Reading from the N-terminus, the 114-residue chain is Ribonuclease P protein component (114 aa).

This sequence belongs to the RnpA family. As to quaternary structure, consists of a catalytic RNA component (M1 or rnpB) and a protein subunit.

It catalyses the reaction Endonucleolytic cleavage of RNA, removing 5'-extranucleotides from tRNA precursor.. In terms of biological role, RNaseP catalyzes the removal of the 5'-leader sequence from pre-tRNA to produce the mature 5'-terminus. It can also cleave other RNA substrates such as 4.5S RNA. The protein component plays an auxiliary but essential role in vivo by binding to the 5'-leader sequence and broadening the substrate specificity of the ribozyme. In Limosilactobacillus fermentum (strain NBRC 3956 / LMG 18251) (Lactobacillus fermentum), this protein is Ribonuclease P protein component.